A 410-amino-acid chain; its full sequence is Segmentation protein fushi tarazu (410 aa).

Disordered stretches follow at residues 71–93 (TQTV…KAED), 138–157 (PAVS…QEYV), and 175–221 (SPQS…SAVS). Residues 76–85 (PVQPTTPPPK) show a composition bias toward pro residues. Over residues 190 to 199 (TPPPTTPTSL) the composition is skewed to pro residues. Residues 254–313 (SKRTRQTYTRYQTLELEKEFHFNRYITRRRRIDIANALSLSERQIKIWFQNRRMKSKKDR) constitute a DNA-binding region (homeobox).

The protein belongs to the Antp homeobox family. Phosphorylated at as many as 16 sites. In terms of tissue distribution, expressed early in development in a striped pattern at the blastoderm stage. Later expressed in a specific subset of neuronal precursor cells, neurons and glia in the developing CNS. Between 5 and 6 hours of development, found in the midline precursor-2 cells in a segmentally repeating pattern. Expression in many other neuronal precursors follows and reaches a second peak of abundance at 9 hours of development. Expressed in the hindgut between 11-15 hours of development.

It localises to the nucleus. May play a role in determining neuronal identity, may be directly involved in specifying identity of individual neurons. Required during embryogenesis for the process of body segmentation. Homeotic protein, required in alternating segment primordia, it specifies the correct number of segments. The polypeptide is Segmentation protein fushi tarazu (ftz) (Drosophila melanogaster (Fruit fly)).